The chain runs to 1046 residues: MDSLKASSAYKRIDTIPKLLEYMWSLFPNIIAIKNGSEKSTSILGSLNKKMYNPMIQNSVEFCDLLAKNILKIQPFAQGGFGQVGSLTIDEDKYNQPLKAIVISFKRYGGFEPFYVSVIIKLYLSNEPPKWSIGESSIDKGTFYISDPLSEMIFGSMLGHLYDLGVCPFFTKYFGAYLCKNEKTSIITEMATIELRKLISRNRNYGIAQKYPLSVINLLFQYVYGLFIMKSYYGMVHFDTQHRNLMATYIHNRDIKINEKIQSPYIYQGEDICNKSFFLFQTHLTSQNPRLNQNGADVPVFICIKNTGLLLKIIDYGVCVSYLNRSLVNPYKNDITISSIKKDLERINALNALNKTRESKSYSNTVDLQYTLTNIWEHMIKGLDSYTGQMAPDVNAPLDYKVALELLNDFSEKFFGESQYRLSNFLQDHPERQVQLTSLKNGGKGLAWVSYIHNTGIEKEEFNNPLRLLEGLINACGSEKNLRINASFKGSINQEISIYYLEPEIPSMIQNLGGLSDDNSVLLLASASDREKNLNLFNHYMNKSNLYKENCYDNVTKSTIQCKQIKSDIYKYSLSSLSSKKLYSPSSQHFIESLNSIPSDSSSSGSSRKSSPRGSPNLGEAPTNEEIFTTFEELPSENLIKRTGIFDYYQVQINPSAINLNRNSKGAQVYQKYQSWLDFKNIKDDKVGDYVETVFLHAFRLRGAVKSIQMDKRKDLWEGALEHFGTEGSAPNGGLAINGGYFIVPGNLNRLYPNLTNRDLFEPIGFSYDSKMLTNGTKLSFPSVYHNDLAFVFGSSSEGRESQINILSYTSFMNLHRTVDDTVRYEIKNTKGVDGLPEIFEETVKAIAMVPFISEDVDEDLIGTRPIKANGSEILDEDYTWAFCTGPILIWEGKVVFTENKMNTDLMVTNIEDKNSLNNEEREILINAVPNAKNSYKYRAAEGEGNQFYGMRHSHRYMVHNILALDAIGRPYFIFCEGRGFDSPGLDRVQLANLISVFGMKTAVSLDGGFSANAVYKDCDNSGNCRPLFALNDPEKRRLGLSLYIS.

Positions 594-615 (LNSIPSDSSSSGSSRKSSPRGS) are enriched in low complexity. The disordered stretch occupies residues 594–622 (LNSIPSDSSSSGSSRKSSPRGSPNLGEAP).

This is an uncharacterized protein from Invertebrate iridescent virus 6 (IIV-6).